Here is a 440-residue protein sequence, read N- to C-terminus: Tyrosine--tRNA ligase (440 aa).

Tyr46 is an L-tyrosine binding site. A 'HIGH' region motif is present at residues 51–60 (PTAASLHIGN). Residues Tyr181 and Gln185 each coordinate L-tyrosine. A 'KMSKS' region motif is present at residues 241–245 (KFGKS). Lys244 provides a ligand contact to ATP. Positions 373-439 (DRVIDAAQAA…GKKALGAVEN (67 aa)) constitute an S4 RNA-binding domain.

Belongs to the class-I aminoacyl-tRNA synthetase family. TyrS type 1 subfamily. Homodimer.

It localises to the cytoplasm. The enzyme catalyses tRNA(Tyr) + L-tyrosine + ATP = L-tyrosyl-tRNA(Tyr) + AMP + diphosphate + H(+). Functionally, catalyzes the attachment of tyrosine to tRNA(Tyr) in a two-step reaction: tyrosine is first activated by ATP to form Tyr-AMP and then transferred to the acceptor end of tRNA(Tyr). The polypeptide is Tyrosine--tRNA ligase (Bifidobacterium longum subsp. infantis (strain ATCC 15697 / DSM 20088 / JCM 1222 / NCTC 11817 / S12)).